Reading from the N-terminus, the 269-residue chain is [LysW]-aminoadipate kinase (269 aa).

Position 5–8 (5–8 (KVGG)) interacts with ATP. Residue Arg-64 coordinates substrate. Tyr-78 is an ATP binding site. Substrate is bound at residue Asn-168.

It belongs to the acetylglutamate kinase family. LysZ subfamily.

The protein resides in the cytoplasm. It carries out the reaction [amino-group carrier protein]-C-terminal-N-(1,4-dicarboxybutan-1-yl)-L-glutamine + ATP = [amino-group carrier protein]-C-terminal-N-(1-carboxy-5-phosphooxy-5-oxopentan-1-yl)-L-glutamine + ADP. Its pathway is amino-acid biosynthesis; L-lysine biosynthesis via AAA pathway; L-lysine from L-alpha-aminoadipate (Thermus route): step 2/5. In terms of biological role, catalyzes the phosphorylation of LysW-gamma-alpha-aminoadipate. Does not phosphorylate N-acetyl-glutamate. In Thermus thermophilus (strain ATCC BAA-163 / DSM 7039 / HB27), this protein is [LysW]-aminoadipate kinase.